The primary structure comprises 270 residues: MPSSFDLLGEMIGLLQTEQLTSSWACPLPNALTKRQDLWRALINQRPALPLSKDYLNLEDAYLDDWRASFVPVSVKDCQKTNYTSLFLYHGDIRYLAVDAIVNAANSELLGCFIPNHGCIDNAIHTFAGSRLRLACQAIMTEQGRKEAIGQAKLTSAYHLPASYIIHTVGPRITKGHHVSPIRADLLARCYRSSLDLAVKAGLTSLAFCSISTGEFGFPKKEAAQIAIKTVLKWQAEHPESKTLTIIFNTFTSEDKALYDTYLQKENNCE.

The Macro domain occupies 73 to 267 (VSVKDCQKTN…LYDTYLQKEN (195 aa)). Residues D92, I93, and N106 each contribute to the ADP-D-ribose site. 3 residues coordinate Zn(2+): C112, H117, and C119. The ADP-D-ribose site is built by C119, I120, D121, S212, T213, G214, E215, and F216.

Belongs to the MacroD-type family. Zn-Macro subfamily. Zn(2+) is required as a cofactor.

It carries out the reaction 4-O-(ADP-D-ribosyl)-L-aspartyl-[protein] + H2O = L-aspartyl-[protein] + ADP-D-ribose + H(+). In terms of biological role, ADP-ribosylhydrolase that specifically reverses the SirTM-mediated mono-ADP-ribosylation at an asparatate residue of GcvH-L, by releasing ADP-ribose from the target protein. May play a role in the regulation of the response to host-induced oxidative stress. This Streptococcus pyogenes serotype M3 (strain ATCC BAA-595 / MGAS315) protein is Protein-ADP-ribose hydrolase.